The primary structure comprises 225 residues: 7-cyano-7-deazaguanine synthase (225 aa).

8 to 18 (VSGGADSATVL) is a binding site for ATP. The Zn(2+) site is built by C188, C198, C201, and C204.

The protein belongs to the QueC family. It depends on Zn(2+) as a cofactor.

It carries out the reaction 7-carboxy-7-deazaguanine + NH4(+) + ATP = 7-cyano-7-deazaguanine + ADP + phosphate + H2O + H(+). It functions in the pathway purine metabolism; 7-cyano-7-deazaguanine biosynthesis. Catalyzes the ATP-dependent conversion of 7-carboxy-7-deazaguanine (CDG) to 7-cyano-7-deazaguanine (preQ(0)). This Rickettsia bellii (strain OSU 85-389) protein is 7-cyano-7-deazaguanine synthase.